The chain runs to 244 residues: DNA polymerase sliding clamp (244 aa).

The protein belongs to the PCNA family. Homotrimer. The subunits circularize to form a toroid; DNA passes through its center. Replication factor C (RFC) is required to load the toroid on the DNA.

In terms of biological role, sliding clamp subunit that acts as a moving platform for DNA processing. Responsible for tethering the catalytic subunit of DNA polymerase and other proteins to DNA during high-speed replication. The protein is DNA polymerase sliding clamp of Methanothrix thermoacetophila (strain DSM 6194 / JCM 14653 / NBRC 101360 / PT) (Methanosaeta thermophila).